An 806-amino-acid chain; its full sequence is Xylosyltransferase sqv-6 (806 aa).

The Cytoplasmic portion of the chain corresponds to 1 to 11 (MLFNGTTKYRD). The helical; Signal-anchor for type II membrane protein transmembrane segment at 12-32 (YAIVISLFFLLNVYLLYNTAQ) threads the bilayer. At 33 to 806 (HTQVGNSKHI…GYDEDTQTLI (774 aa)) the chain is on the lumenal side. Cys-57 and Cys-85 form a disulfide bridge. N-linked (GlcNAc...) asparagine glycans are attached at residues Asn-89 and Asn-169. Disulfide bonds link Cys-101–Cys-445, Cys-464–Cys-478, and Cys-466–Cys-476. In terms of domain architecture, WSC spans 109-205 (IDQRIGCFLD…FNAVEIFRTG (97 aa)). UDP-alpha-D-xylose is bound by residues Asp-264 and 293–295 (TIW). Asn-325 carries an N-linked (GlcNAc...) asparagine glycan. A UDP-alpha-D-xylose-binding site is contributed by 398–399 (DW). UDP-alpha-D-xylose contacts are provided by residues Ser-479 and 505 to 506 (RK). Asn-614, Asn-655, and Asn-719 each carry an N-linked (GlcNAc...) asparagine glycan. A disulfide bond links Cys-772 and Cys-778.

This sequence belongs to the glycosyltransferase 14 family. XylT subfamily. A divalent metal cation is required as a cofactor.

The protein localises to the endoplasmic reticulum membrane. Its subcellular location is the golgi apparatus membrane. It carries out the reaction UDP-alpha-D-xylose + L-seryl-[protein] = 3-O-(beta-D-xylosyl)-L-seryl-[protein] + UDP + H(+). It functions in the pathway glycan metabolism; chondroitin sulfate biosynthesis. Its pathway is glycan metabolism; heparan sulfate biosynthesis. Its function is as follows. Catalyzes the first step in biosynthesis of glycosaminoglycan. Transfers D-xylose from UDP-D-xylose to specific serine residues of the core protein. Required for vulval morphogenesis and zygotic cytokinesis, suggesting that glycosaminoglycans play a central role in vulval morphogenesis. The chain is Xylosyltransferase sqv-6 from Caenorhabditis elegans.